A 38-amino-acid polypeptide reads, in one-letter code: Photosystem II reaction center protein L (38 aa).

A helical transmembrane segment spans residues 17–37 (SLFLGRLLIFVLGILFSSYIF).

It belongs to the PsbL family. PSII is composed of 1 copy each of membrane proteins PsbA, PsbB, PsbC, PsbD, PsbE, PsbF, PsbH, PsbI, PsbJ, PsbK, PsbL, PsbM, PsbT, PsbX, PsbY, PsbZ, Psb30/Ycf12, peripheral proteins PsbO, CyanoQ (PsbQ), PsbU, PsbV and a large number of cofactors. It forms dimeric complexes.

Its subcellular location is the cellular thylakoid membrane. One of the components of the core complex of photosystem II (PSII). PSII is a light-driven water:plastoquinone oxidoreductase that uses light energy to abstract electrons from H(2)O, generating O(2) and a proton gradient subsequently used for ATP formation. It consists of a core antenna complex that captures photons, and an electron transfer chain that converts photonic excitation into a charge separation. This subunit is found at the monomer-monomer interface and is required for correct PSII assembly and/or dimerization. This is Photosystem II reaction center protein L from Prochlorothrix hollandica.